The following is a 258-amino-acid chain: Terpene cyclase macJ (258 aa).

The next 7 membrane-spanning stretches (helical) occupy residues 29–49 (VPDG…ILMA), 58–78 (YAMP…YGFV), 83–103 (LLNQ…FYAI), 124–144 (IIVV…ATFI), 151–171 (VVFM…IAQL), 181–201 (SWGI…CFFW), and 220–240 (FLLL…VYVQ).

This sequence belongs to the paxB family.

The protein localises to the membrane. The protein operates within secondary metabolite biosynthesis; terpenoid biosynthesis. Its function is as follows. Terpene cyclase; part of the gene cluster that mediates the biosynthesis of macrophorins, isoprenoid epoxycyclohexenones containing cyclized drimane moieties. The first step of the pathway is the synthesis of 6-methylsalicylic acid (6-MSA) by the polyketide synthase macA. 6-MSA is then converted to m-cresol by the decarboxylase macB. The cytochrome P450 monooxygenase macC then catalyzes the oxidation of m-cresol to toluquinol. Epoxidation of toluquinol is then performed by the short chain dehydrogenase macD, with the help of macE, and a further prenylation by macG leads to 7-deacetoxyyanuthone A. The next step is the hydroxylation of C-22 of 7-deacetoxyyanuthone A by the cytochrome P450 monooxygenase macH to yield 22-deacetylyanuthone A. O-Mevalon transferase macI then attaches mevalon to the hydroxyl group of 22-deacetylyanuthone A to produce yanuthone E. The terpene cyclase macJ catalyzes the cyclization of 22-deacetylyanuthone A to macrophorin A. MacJ is also able to catalyze cyclization of yanuthone E and 7-deacetoxyyanuthone A to their corresponding macrophorins. The macJ products can be further modified by macH and macJ, as well as by the FAD-dependent monooxygenase macF, to produce additional macrophorins, including 4'-oxomacrophorin A, 4'-oxomacrophorin D and 4'-oxomacrophorin E. This Penicillium terrestre protein is Terpene cyclase macJ.